Consider the following 490-residue polypeptide: 5'-3' exonuclease PLD3 (490 aa).

Residues 1–38 (MKPKLMYQELKVPAEEPASELPMNEIEAWKAAEKKARW) are Cytoplasmic-facing. The helical; Signal-anchor for type II membrane protein transmembrane segment at 39 to 59 (VLLVLILAVVGFGALMTQLFL) threads the bilayer. At 60–490 (WEYGDLHLFG…DSVGNACRLL (431 aa)) the chain is on the lumenal side. Cystine bridges form between cysteine 77/cysteine 239 and cysteine 81/cysteine 237. N-linked (GlcNAc...) asparagine glycans are attached at residues asparagine 97 and asparagine 132. In terms of domain architecture, PLD phosphodiesterase 1 spans 196-223 (THGVLHTKFWVVDQTHFYLGSANMDWRS). Residues histidine 201, lysine 203, and aspartate 208 contribute to the active site. Histidine 201 (proton donor) is an active-site residue. 2 residues coordinate phosphate: histidine 201 and lysine 203. Asparagine 218 provides a ligand contact to phosphate. 3 N-linked (GlcNAc...) asparagine glycosylation sites follow: asparagine 236, asparagine 284, and asparagine 387. A disulfide bridge connects residues cysteine 366 and cysteine 487. The 27-residue stretch at 411-437 (YARVNHNKYMVTERATYIGTSNWSGSY) folds into the PLD phosphodiesterase 2 domain. Histidine 416 serves as a coordination point for phosphate. The Nucleophile role is filled by histidine 416. Phenylalanine 438 provides a ligand contact to Mg(2+).

It belongs to the phospholipase D family. In terms of assembly, homodimer. Interacts with APP. N-glycosylated. In terms of processing, proteolytically processed to a soluble form that is stable within endosomes and lysosomes. During transport through the secretory pathway becomes proteolysed by cysteine proteases, thereby releasing a stable soluble lysosomal lumenal polypeptide, whereas the transmembrane-bound fragment is rapidly degraded. Its transport route to lysosomes involves ubiquitination and the ESCRT complex. Post-translationally, ubiquitinated. Ubiquitination mediates sorting into lysosomes.

The protein localises to the endoplasmic reticulum membrane. It is found in the lysosome lumen. The protein resides in the early endosome membrane. Its subcellular location is the late endosome membrane. It localises to the golgi apparatus membrane. The protein localises to the endosome membrane. It carries out the reaction Exonucleolytic cleavage in the 5'- to 3'-direction to yield nucleoside 3'-phosphates.. The catalysed reaction is a 5'-end 5'-dephospho-ribonucleotidyl-ribonucleotide-RNA + H2O = a ribonucleoside 3'-phosphate + a 5'-end dephospho-ribonucleoside-RNA + H(+). The enzyme catalyses a ribonucleoside 3'-phosphate-2'-3'-cyclophospho-GMP + H2O = a ribonucleoside 3'-phosphate + 2',3'-cyclophospho-GMP + H(+). It catalyses the reaction a 5'-end 5'-dephospho-2'-deoxyribonucleotidyl-2'-deoxyribonucleotide in single-stranded DNA + H2O = a 5'-end dephospho-2'-deoxyribonucleoside in single-stranded DNA + a 2'-deoxyribonucleoside 3'-phosphate + H(+). It carries out the reaction a 5'-end 5'-phospho-2'-deoxyribonucleotide in single-stranded DNA + H2O = a 5'-end 5'-dephospho-2'-deoxyribonucleotide in single-stranded DNA + phosphate. The catalysed reaction is a 3-lyso-sn-glycero-1-phospho-(3'-acyl-1'-sn-glycerol) + a 1-acyl-sn-glycerol = a 3-acyl-sn-glycero-1-phospho-(3'-acyl-1'-sn-glycerol) + glycerol. The enzyme catalyses 3-lyso-sn-glycero-1-phospho-(3'-(9Z-octadecenoyl)-1'-sn-glycerol) + 1-(9Z-octadecenoyl)-sn-glycerol = 3-(9Z-octadecenoyl)-sn-glycero-1-phospho-(3'-(9Z-octadecenoyl)-1'-sn-glycerol) + glycerol. Its function is as follows. 5'-&gt;3' exonuclease that hydrolyzes the phosphodiester bond of single-stranded DNA (ssDNA) and RNA molecules to form nucleoside 3'-monophosphates and 5'-end 5'-hydroxy deoxyribonucleotide/ribonucleotide fragments. Partially redundant with PLD4, can cleave all four nucleotides displaying higher efficiency for ssDNA and RNA fragments initiated with uridine and guanosine residues and lower efficiency for cytidine-initiated substrates. As a result, it does not always degrade polynucleotides to the single nucleotide level, it can stall at specific sites sparing certain fragments from exonucleolytic degradation. Processes self and pathogenic ssDNA and RNA molecules that reach the endolysosomal compartment via phagocytosis or autophagy and may serve as 'danger' signals for recognition by innate immune receptors such as toll-like receptors (TLRs). Degrades mitochondrial CpG-rich ssDNA fragments to prevent TLR9 activation and autoinflammatory response, but it can cleave viral RNA to generate ligands for TLR7 activation and initiate antiviral immune responses. In plasmacytoid dendritic cells, it cooperates with endonuclease RNASET2 to release 2',3'-cyclic guanosine monophosphate (2',3'-cGMP), a potent stimulatory ligand for TLR7. Produces 2',3'-cGMPs and cytidine-rich RNA fragments that occupy TLR7 ligand-binding pockets and trigger a signaling-competent state. Can exert polynucleotide phosphatase activity toward 5'-phosphorylated ssDNA substrates although at a slow rate. Transphosphatidylase that catalyzes the exchange with R to S stereo-inversion of the glycerol moiety between (S,R)-lysophosphatidylglycerol (LPG) and monoacylglycerol (MAG) substrates to yield (S,S)-bis(monoacylglycero)phosphate (BMP). Can synthesize a variety of (S,S)-BMPs representing the main phospholipid constituent of lysosomal intralumenal vesicle (ILV) membranes that bind acid hydrolases for lipid degradation. Regulates the homeostasis and interorganellar communication of the endolysosomal system with an overall impact on cellular removal of dysfunctional organelles via autophagy as well as proper protein and lipid turnover. May play a role in myotube formation in response to ER stress. This chain is 5'-3' exonuclease PLD3 (PLD3), found in Bos taurus (Bovine).